The sequence spans 207 residues: MPMLSPHSLKPDTLHLPPGTSEFLGCQRRHTLPASEFRCLTPQDAISVFEIEREAFISVSGTCPLYLDEIRHFLTLCPELSLGWFEEGRLVAFIIGSLWDKERLTQESLTLHRPGGRTAHLHVLAVHRTFRQQGKGSVLLWRYLHHLGSQPAVRRAVLMCEDALVPFYEKFGFQAVGPCAVTVGSLTFMELQCSLRCHAFLRRNSGC.

A Phosphothreonine; by PKA modification is found at T31. In terms of domain architecture, N-acetyltransferase spans 35–194 (SEFRCLTPQD…SLTFMELQCS (160 aa)). Position 124 (L124) interacts with substrate. Acetyl-CoA-binding positions include 124–126 (LAV) and 132–137 (QQGKGS). Residue M159 participates in substrate binding. 168–170 (YEK) lines the acetyl-CoA pocket. S205 carries the phosphoserine modification.

The protein belongs to the acetyltransferase family. AANAT subfamily. Monomer. Interacts with several 14-3-3 proteins, including YWHAB, YWHAE, YWHAG and YWHAZ, preferentially when phosphorylated at Thr-31. Phosphorylation on Ser-205 also allows binding to YWHAZ, but with lower affinity. The interaction with YWHAZ considerably increases affinity for arylalkylamines and acetyl-CoA and protects the enzyme from dephosphorylation and proteasomal degradation. It may also prevent thiol-dependent inactivation. Post-translationally, cAMP-dependent phosphorylation on both N-terminal Thr-31 and C-terminal Ser-205 regulates AANAT activity by promoting interaction with 14-3-3 proteins. Highly expressed in pineal gland and retina. Also detected in heart and intestine.

It localises to the cytoplasm. It catalyses the reaction a 2-arylethylamine + acetyl-CoA = an N-acetyl-2-arylethylamine + CoA + H(+). It participates in aromatic compound metabolism; melatonin biosynthesis; melatonin from serotonin: step 1/2. Its function is as follows. Controls the night/day rhythm of melatonin production in the pineal gland. Catalyzes the N-acetylation of serotonin into N-acetylserotonin, the penultimate step in the synthesis of melatonin. This is Serotonin N-acetyltransferase (AANAT) from Mesocricetus auratus (Golden hamster).